The chain runs to 432 residues: D-amino acid dehydrogenase (432 aa).

3 to 17 (VLVLGSGVVGTASAY) contributes to the FAD binding site.

Belongs to the DadA oxidoreductase family. The cofactor is FAD.

The enzyme catalyses a D-alpha-amino acid + A + H2O = a 2-oxocarboxylate + AH2 + NH4(+). Its pathway is amino-acid degradation; D-alanine degradation; NH(3) and pyruvate from D-alanine: step 1/1. Its function is as follows. Oxidative deamination of D-amino acids. This Stutzerimonas stutzeri (strain A1501) (Pseudomonas stutzeri) protein is D-amino acid dehydrogenase.